The following is a 220-amino-acid chain: Sec-independent protein translocase protein TatB (220 aa).

Residues 1-21 (MFDIGFSELLLVLVIGLVVLG) traverse the membrane as a helical segment. A disordered region spans residues 190–220 (VTKQQIDTIDSHGTDLSSAGPSRIHQPGGDQ).

This sequence belongs to the TatB family. The Tat system comprises two distinct complexes: a TatABC complex, containing multiple copies of TatA, TatB and TatC subunits, and a separate TatA complex, containing only TatA subunits. Substrates initially bind to the TatABC complex, which probably triggers association of the separate TatA complex to form the active translocon.

The protein resides in the cell inner membrane. In terms of biological role, part of the twin-arginine translocation (Tat) system that transports large folded proteins containing a characteristic twin-arginine motif in their signal peptide across membranes. Together with TatC, TatB is part of a receptor directly interacting with Tat signal peptides. TatB may form an oligomeric binding site that transiently accommodates folded Tat precursor proteins before their translocation. This Yersinia pseudotuberculosis serotype I (strain IP32953) protein is Sec-independent protein translocase protein TatB.